We begin with the raw amino-acid sequence, 528 residues long: Peptide chain release factor 3 (528 aa).

Positions 11–279 constitute a tr-type G domain; that stretch reads SRRRTFAIIS…GLVDWAPSPQ (269 aa). GTP contacts are provided by residues 20–27, 88–92, and 142–145; these read SHPDAGKT, DTPGH, and NKLD.

It belongs to the TRAFAC class translation factor GTPase superfamily. Classic translation factor GTPase family. PrfC subfamily.

It is found in the cytoplasm. Functionally, increases the formation of ribosomal termination complexes and stimulates activities of RF-1 and RF-2. It binds guanine nucleotides and has strong preference for UGA stop codons. It may interact directly with the ribosome. The stimulation of RF-1 and RF-2 is significantly reduced by GTP and GDP, but not by GMP. This chain is Peptide chain release factor 3, found in Pseudoalteromonas atlantica (strain T6c / ATCC BAA-1087).